The chain runs to 286 residues: Probable ketoamine kinase YniA (286 aa).

Residue 91–93 (DYL) coordinates ATP. Asp193 functions as the Proton acceptor in the catalytic mechanism.

It belongs to the fructosamine kinase family.

In terms of biological role, ketoamine kinase that phosphorylates ketoamines on the third carbon of the sugar moiety to generate ketoamine 3-phosphate. Its precise substrate are unknown: does not have ribulosamine and/or erythrulosamine 3-kinase activity in vitro. In Escherichia coli (strain K12), this protein is Probable ketoamine kinase YniA (yniA).